The sequence spans 271 residues: Methylcorrinoid:tetrahydrofolate methyltransferase (271 aa).

Positions methionine 1–leucine 247 constitute a Pterin-binding domain.

The protein belongs to the vitamin-B12 dependent methionine synthase family. As to quaternary structure, the proline betaine:THF methyl transfer system is composed of two methyltransferases, MtpB and MtqA, and the corrinoid protein MtqC. The L-carnitine:THF methyl transfer system is composed of two methyltransferases, MtcB and MtqA, and the corrinoid protein MtqC.

It catalyses the reaction methyl-Co(III)-[quaternary-amine-specific corrinoid protein] + (6S)-5,6,7,8-tetrahydrofolate = Co(I)-[quaternary-amine-specific corrinoid protein] + (6S)-5-methyl-5,6,7,8-tetrahydrofolate + H(+). In terms of biological role, involved in the degradation of the quaternary amines L-proline betaine and L-carnitine. Component of a corrinoid-dependent methyltransferase system that transfers a methyl group from L-proline betaine or L-carnitine to tetrahydrofolate (THF), forming methyl-THF, a key intermediate in the Wood-Ljungdahl acetogenesis pathway. MtqA catalyzes the transfer of a methyl group from the methylated corrinoid protein MtqC to THF, forming methyl-THF. The protein is Methylcorrinoid:tetrahydrofolate methyltransferase of Eubacterium limosum.